The following is a 623-amino-acid chain: Bifunctional enzyme CysN/CysC (623 aa).

Residues 1–450 (MQSVIAYLKQ…HVARARIKGQ (450 aa)) are sulfate adenylyltransferase. A tr-type G domain is found at 14–228 (KPLLRFITCG…YLEALEPADV (215 aa)). The interval 23–30 (GSVDDGKS) is G1. A GTP-binding site is contributed by 23–30 (GSVDDGKS). The G2 stretch occupies residues 81–85 (GITID). The G3 stretch occupies residues 102-105 (DCPG). Residues 102 to 106 (DCPGH) and 157 to 160 (NKMD) each bind GTP. The segment at 157 to 160 (NKMD) is G4. The interval 194–196 (SAL) is G5. The adenylyl-sulfate kinase stretch occupies residues 451-623 (TPKVLWFTGL…VLSLLGVEGK (173 aa)). Residue 459-466 (GLSGAGKS) coordinates ATP. The active-site Phosphoserine intermediate is the serine 533.

The protein in the C-terminal section; belongs to the APS kinase family. In the N-terminal section; belongs to the TRAFAC class translation factor GTPase superfamily. Classic translation factor GTPase family. CysN/NodQ subfamily. Heterodimer composed of CysD, the smaller subunit, and CysNC.

The catalysed reaction is sulfate + ATP + H(+) = adenosine 5'-phosphosulfate + diphosphate. It catalyses the reaction adenosine 5'-phosphosulfate + ATP = 3'-phosphoadenylyl sulfate + ADP + H(+). It functions in the pathway sulfur metabolism; hydrogen sulfide biosynthesis; sulfite from sulfate: step 1/3. The protein operates within sulfur metabolism; hydrogen sulfide biosynthesis; sulfite from sulfate: step 2/3. With CysD forms the ATP sulfurylase (ATPS) that catalyzes the adenylation of sulfate producing adenosine 5'-phosphosulfate (APS) and diphosphate, the first enzymatic step in sulfur assimilation pathway. APS synthesis involves the formation of a high-energy phosphoric-sulfuric acid anhydride bond driven by GTP hydrolysis by CysN coupled to ATP hydrolysis by CysD. Functionally, APS kinase catalyzes the synthesis of activated sulfate. This Xylella fastidiosa (strain Temecula1 / ATCC 700964) protein is Bifunctional enzyme CysN/CysC (cysNC).